We begin with the raw amino-acid sequence, 359 residues long: 3-dehydroquinate synthase (359 aa).

Residues 69 to 74 (DGEAYK), 103 to 107 (GVIGD), 127 to 128 (TT), Lys140, Lys149, and 167 to 170 (CLKT) each bind NAD(+). Zn(2+) is bound by residues Glu182, His245, and His262.

Belongs to the sugar phosphate cyclases superfamily. Dehydroquinate synthase family. Co(2+) serves as cofactor. It depends on Zn(2+) as a cofactor. The cofactor is NAD(+).

The protein resides in the cytoplasm. The enzyme catalyses 7-phospho-2-dehydro-3-deoxy-D-arabino-heptonate = 3-dehydroquinate + phosphate. Its pathway is metabolic intermediate biosynthesis; chorismate biosynthesis; chorismate from D-erythrose 4-phosphate and phosphoenolpyruvate: step 2/7. In terms of biological role, catalyzes the conversion of 3-deoxy-D-arabino-heptulosonate 7-phosphate (DAHP) to dehydroquinate (DHQ). The sequence is that of 3-dehydroquinate synthase from Aeromonas salmonicida (strain A449).